We begin with the raw amino-acid sequence, 518 residues long: Transcription factor TT8 (518 aa).

2 coiled-coil regions span residues 220–240 (EVHEEAEDEEEVEEEMTMSEE) and 405–428 (VNHLRKRVHELENTHHEQQHKRTR). The bHLH domain maps to 359–408 (REDLSHVVAERRRREKLNEKFITLRSMVPFVTKMDKVSILGDTIAYVNHL).

Belongs to the bHLH protein family. In terms of assembly, homodimer. Interacts with MYB4, MYB5, MYB6, MYB82, MYB113, MYB114, MYB75/PAP1, MYB90/PAP2, and TT2. In terms of tissue distribution, buds, flowers and developing siliques, but not in leaves, stems and roots.

The protein resides in the nucleus. In terms of biological role, transcription activator, when associated with MYB75/PAP1 or MYB90/PAP2. Involved in the control of flavonoid pigmentation. Plays a key role in regulating leucoanthocyanidin reductase (BANYULS) and dihydroflavonol-4-reductase (DFR). Not required for leucoanthocyanidin dioxygenase (LDOX) expression. In Arabidopsis thaliana (Mouse-ear cress), this protein is Transcription factor TT8.